Here is a 713-residue protein sequence, read N- to C-terminus: NAD(+) hydrolase SARM1 (713 aa).

Residues 53–96 (DVQAVLDGSLPALRSAIRTLRSSKDTGDLEETRRAIAETFQLVE) form an ARM 1 repeat. Residues Trp99, Arg106, 145 to 153 (EQILVSENR), and 186 to 189 (HMFK) each bind NAD(+). 7 ARM repeats span residues 110 to 149 (EEIC…QILV), 151 to 189 (ENRD…HMFK), 192 to 231 (EETS…NCAM), 233 to 276 (GGHR…LAAN), 277 to 310 (REME…NMLD), 311 to 350 (SADS…VETS), and 355 to 398 (QRNT…EEVP). 2 SAM domains span residues 408 to 472 (WKSG…LKTY) and 478 to 537 (CDPN…ILSA). The region spanning 552-695 (KGPDVFISYR…KILRFLEGCP (144 aa)) is the TIR domain. NAD(+)-binding positions include 561 to 562 (RR) and Glu591. Glu634 is an active-site residue.

It belongs to the SARM1 family. In terms of assembly, homooctamer; forms an octameric ring via SAM domains.

It is found in the cytoplasm. It localises to the cell projection. Its subcellular location is the axon. The protein localises to the dendrite. The protein resides in the synapse. It is found in the mitochondrion. The catalysed reaction is NAD(+) + H2O = ADP-D-ribose + nicotinamide + H(+). It catalyses the reaction NAD(+) = cyclic ADP-beta-D-ribose + nicotinamide + H(+). The enzyme catalyses NADP(+) + H2O = ADP-D-ribose 2'-phosphate + nicotinamide + H(+). With respect to regulation, autoinhibited: in the inactive state, the enzymatic TIR domain is held apart by the autoinhibiting ARM repeats. NAD(+)-binding to ARM repeats maintains an inactive state by promoting interaction between ARM repeats and the TIR domain, thereby facilitating inhibition of the enzymatic TIR domain. Following activation, possibly by nicotinamide mononucleotide (NMN), auto-inhibitory interactions are released, allowing self-association of the TIR domains and subsequent activation of the NAD(+) hydrolase (NADase) activity. Self-association of TIR domains is facilitated by the octamer of SAM domains. Its function is as follows. NAD(+) hydrolase, which plays a key role in axonal degeneration following injury by regulating NAD(+) metabolism. Acts as a negative regulator of MYD88- and TRIF-dependent toll-like receptor signaling pathway by promoting Wallerian degeneration, an injury-induced form of programmed subcellular death which involves degeneration of an axon distal to the injury site. Wallerian degeneration is triggerred by NAD(+) depletion: in response to injury, SARM1 is activated and catalyzes cleavage of NAD(+) into ADP-D-ribose (ADPR), cyclic ADPR (cADPR) and nicotinamide; NAD(+) cleavage promoting cytoskeletal degradation and axon destruction. Also able to hydrolyze NADP(+), but not other NAD(+)-related molecules. Can activate neuronal cell death in response to stress. The polypeptide is NAD(+) hydrolase SARM1 (Danio rerio (Zebrafish)).